The following is an 872-amino-acid chain: Alanine--tRNA ligase (872 aa).

Zn(2+)-binding residues include H567, H571, C669, and H673.

It belongs to the class-II aminoacyl-tRNA synthetase family. Zn(2+) is required as a cofactor.

The protein resides in the cytoplasm. It catalyses the reaction tRNA(Ala) + L-alanine + ATP = L-alanyl-tRNA(Ala) + AMP + diphosphate. Its function is as follows. Catalyzes the attachment of alanine to tRNA(Ala) in a two-step reaction: alanine is first activated by ATP to form Ala-AMP and then transferred to the acceptor end of tRNA(Ala). Also edits incorrectly charged Ser-tRNA(Ala) and Gly-tRNA(Ala) via its editing domain. This Streptococcus agalactiae serotype III (strain NEM316) protein is Alanine--tRNA ligase.